The sequence spans 260 residues: UPF0246 protein Tola_0968 (260 aa).

Belongs to the UPF0246 family.

The chain is UPF0246 protein Tola_0968 from Tolumonas auensis (strain DSM 9187 / NBRC 110442 / TA 4).